The chain runs to 270 residues: Acyl-[acyl-carrier-protein]--UDP-N-acetylglucosamine O-acyltransferase (270 aa).

This sequence belongs to the transferase hexapeptide repeat family. LpxA subfamily. As to quaternary structure, homotrimer.

It is found in the cytoplasm. It carries out the reaction a (3R)-hydroxyacyl-[ACP] + UDP-N-acetyl-alpha-D-glucosamine = a UDP-3-O-[(3R)-3-hydroxyacyl]-N-acetyl-alpha-D-glucosamine + holo-[ACP]. Its pathway is glycolipid biosynthesis; lipid IV(A) biosynthesis; lipid IV(A) from (3R)-3-hydroxytetradecanoyl-[acyl-carrier-protein] and UDP-N-acetyl-alpha-D-glucosamine: step 1/6. Involved in the biosynthesis of lipid A, a phosphorylated glycolipid that anchors the lipopolysaccharide to the outer membrane of the cell. The protein is Acyl-[acyl-carrier-protein]--UDP-N-acetylglucosamine O-acyltransferase of Helicobacter pylori (strain G27).